A 268-amino-acid polypeptide reads, in one-letter code: 4-hydroxy-tetrahydrodipicolinate reductase (268 aa).

7-12 (GANGRM) is an NAD(+) binding site. Arginine 34 is an NADP(+) binding site. NAD(+) contacts are provided by residues 97-99 (GTT) and 121-124 (SENM). Histidine 155 acts as the Proton donor/acceptor in catalysis. Histidine 156 lines the (S)-2,3,4,5-tetrahydrodipicolinate pocket. Residue lysine 159 is the Proton donor of the active site. Residue 165-166 (GT) participates in (S)-2,3,4,5-tetrahydrodipicolinate binding.

The protein belongs to the DapB family.

It localises to the cytoplasm. It catalyses the reaction (S)-2,3,4,5-tetrahydrodipicolinate + NAD(+) + H2O = (2S,4S)-4-hydroxy-2,3,4,5-tetrahydrodipicolinate + NADH + H(+). The enzyme catalyses (S)-2,3,4,5-tetrahydrodipicolinate + NADP(+) + H2O = (2S,4S)-4-hydroxy-2,3,4,5-tetrahydrodipicolinate + NADPH + H(+). It participates in amino-acid biosynthesis; L-lysine biosynthesis via DAP pathway; (S)-tetrahydrodipicolinate from L-aspartate: step 4/4. In terms of biological role, catalyzes the conversion of 4-hydroxy-tetrahydrodipicolinate (HTPA) to tetrahydrodipicolinate. This is 4-hydroxy-tetrahydrodipicolinate reductase from Bartonella bacilliformis (strain ATCC 35685 / KC583 / Herrer 020/F12,63).